Reading from the N-terminus, the 431-residue chain is Serine hydroxymethyltransferase 3 (431 aa).

(6S)-5,6,7,8-tetrahydrofolate contacts are provided by residues Leu131 and 135 to 137 (GHL). The residue at position 240 (Lys240) is an N6-(pyridoxal phosphate)lysine.

This sequence belongs to the SHMT family. In terms of assembly, homodimer. Pyridoxal 5'-phosphate is required as a cofactor.

It is found in the cytoplasm. It carries out the reaction (6R)-5,10-methylene-5,6,7,8-tetrahydrofolate + glycine + H2O = (6S)-5,6,7,8-tetrahydrofolate + L-serine. It functions in the pathway one-carbon metabolism; tetrahydrofolate interconversion. Its pathway is amino-acid biosynthesis; glycine biosynthesis; glycine from L-serine: step 1/1. Functionally, catalyzes the reversible interconversion of serine and glycine with tetrahydrofolate (THF) serving as the one-carbon carrier. This reaction serves as the major source of one-carbon groups required for the biosynthesis of purines, thymidylate, methionine, and other important biomolecules. Also exhibits THF-independent aldolase activity toward beta-hydroxyamino acids, producing glycine and aldehydes, via a retro-aldol mechanism. The sequence is that of Serine hydroxymethyltransferase 3 from Colwellia psychrerythraea (strain 34H / ATCC BAA-681) (Vibrio psychroerythus).